A 177-amino-acid polypeptide reads, in one-letter code: R-phycoerythrin beta chain (177 aa).

The phycourobilin site is built by C50 and C61. Position 72 is an N4-methylasparagine (N72). The (2R,3E)-phycoerythrobilin site is built by C82 and C158.

Belongs to the phycobiliprotein family. As to quaternary structure, heterodimer of an alpha and a beta chain. Post-translationally, contains two covalently linked phycoerythrobilin chromophores and one covalently linked phycourobilin chromophore.

It is found in the plastid. It localises to the chloroplast thylakoid membrane. Functionally, light-harvesting photosynthetic bile pigment-protein from the phycobiliprotein complex. This Pyropia yezoensis (Susabi-nori) protein is R-phycoerythrin beta chain (cpeB).